The following is a 191-amino-acid chain: Probable rho GDP-dissociation inhibitor (191 aa).

The segment at 1 to 22 is disordered; it reads MSDHENTGENTSEYQYKQPPQK. Residues 8–21 are compositionally biased toward polar residues; that stretch reads GENTSEYQYKQPPQ.

This sequence belongs to the Rho GDI family.

The protein localises to the cytoplasm. Regulates the GDP/GTP exchange reaction of the Rho proteins by inhibiting the dissociation of GDP from them, and the subsequent binding of GTP to them. This Caenorhabditis elegans protein is Probable rho GDP-dissociation inhibitor (rhi-1).